A 320-amino-acid chain; its full sequence is F-box protein At2g02240 (320 aa).

Residues 58–104 (TSPFDVLPEDCISNIISFTSPRDACVAASVSKTFESAVSSDCVWDKF) form the F-box domain.

The chain is F-box protein At2g02240 from Arabidopsis thaliana (Mouse-ear cress).